Here is a 363-residue protein sequence, read N- to C-terminus: Protein RecA (363 aa).

79-86 contacts ATP; it reads GPESSGKT.

It belongs to the RecA family.

It is found in the cytoplasm. Its function is as follows. Can catalyze the hydrolysis of ATP in the presence of single-stranded DNA, the ATP-dependent uptake of single-stranded DNA by duplex DNA, and the ATP-dependent hybridization of homologous single-stranded DNAs. It interacts with LexA causing its activation and leading to its autocatalytic cleavage. This Borrelia turicatae (strain 91E135) protein is Protein RecA.